Here is a 498-residue protein sequence, read N- to C-terminus: Glutamate--tRNA ligase (498 aa).

The 'HIGH' region motif lies at 10-20 (PSPTGYFHIGG). Residues 252–256 (KLSKR) carry the 'KMSKS' region motif. An ATP-binding site is contributed by lysine 255.

It belongs to the class-I aminoacyl-tRNA synthetase family. Glutamate--tRNA ligase type 1 subfamily. In terms of assembly, monomer.

It localises to the cytoplasm. The catalysed reaction is tRNA(Glu) + L-glutamate + ATP = L-glutamyl-tRNA(Glu) + AMP + diphosphate. Catalyzes the attachment of glutamate to tRNA(Glu) in a two-step reaction: glutamate is first activated by ATP to form Glu-AMP and then transferred to the acceptor end of tRNA(Glu). The protein is Glutamate--tRNA ligase of Mycoplasmoides gallisepticum (strain R(low / passage 15 / clone 2)) (Mycoplasma gallisepticum).